A 74-amino-acid chain; its full sequence is Small ribosomal subunit protein bS18 (74 aa).

It belongs to the bacterial ribosomal protein bS18 family. As to quaternary structure, part of the 30S ribosomal subunit. Forms a tight heterodimer with protein bS6.

In terms of biological role, binds as a heterodimer with protein bS6 to the central domain of the 16S rRNA, where it helps stabilize the platform of the 30S subunit. This Coprothermobacter proteolyticus (strain ATCC 35245 / DSM 5265 / OCM 4 / BT) protein is Small ribosomal subunit protein bS18.